Reading from the N-terminus, the 185-residue chain is MSNVELRIENIVASVDLFASLDLEKVIEICPHSKYNPEEFPGIICRFDEPKVALLVFSSGKLVVTGAKSVDDIQAAVSKLVEMLSKIGTKFGRAPEIDIQNMVFSGDLKMEFNLDAVALVLPNCEYEPEQFPGVIYRVKDPKAVILLFSSGKIVCSGAKSEHDAWEAVKKLLHELDKYGLIEEEA.

2 repeat units span residues 8–84 (IENI…VEML) and 99–175 (IQNM…LHEL).

The protein belongs to the TBP family.

Its function is as follows. General factor that plays a role in the activation of archaeal genes transcribed by RNA polymerase. Binds specifically to the TATA box promoter element which lies close to the position of transcription initiation. This Thermococcus sibiricus (strain DSM 12597 / MM 739) protein is TATA-box-binding protein.